We begin with the raw amino-acid sequence, 1001 residues long: X-linked retinitis pigmentosa GTPase regulator (1001 aa).

RCC1 repeat units lie at residues 54-105 (NKLY…STDT), 106-158 (GGVY…LTED), 159-208 (GKLF…VTMD), 209-261 (GELY…LTEK), 262-313 (VVYA…MTEL), and 314-367 (GLLY…FATP). The tract at residues 404 to 428 (SLSARLRRRERERPPCSASMVGTLP) is disordered. A Phosphoserine modification is found at Ser518. Basic and acidic residues-rich tracts occupy residues 631–641 (KKIRESEENSK) and 659–671 (EDNK…RRSS). 4 disordered regions span residues 631 to 738 (KKIR…WYDR), 794 to 869 (NLEF…EGSE), 902 to 925 (PKGH…DPTS), and 962 to 1001 (GDQI…CTIL). Acidic residues-rich tracts occupy residues 679–691 (SETE…DSYM) and 717–731 (EKDE…EVET). Basic and acidic residues-rich tracts occupy residues 794–818 (NLEF…EKEA), 847–857 (EERKEGEKEIV), and 902–911 (PKGHMYDRVK). Positions 976–1001 (QNHMGQNLQDSTTPNMEGKSKSCTIL) are enriched in polar residues. Cys998 carries the post-translational modification Cysteine methyl ester. Cys998 is lipidated: S-geranylgeranyl cysteine. Residues 999 to 1001 (TIL) constitute a propeptide, removed in mature form.

Interacts with SPATA7. Interacts with PDE6D. Interacts with RPGRIP1 and RPGRIP1L; PDE6D, RPGRIP1 and RPGRIP1L may compete for the same binding sites. Interacts with NPM1. Interacts with PDE6D. Isoform 5 interacts (via N-terminus) with SMC1A and SMC3. Isoform 5 interacts with CEP290. Interacts with WHRN. Interacts with RAB37 and RAB8A (in GDP-bound forms); functions as GEF for RAB37 and RAB8A. In terms of processing, prenylated. In terms of tissue distribution, expressed in the retina (at protein level). Located mainly in the connecting cilia between the outer segment and inner segment and also observed in the outer plexiform layer, inner plexiform layer, and ganglion cell layer of the retinas. Isoform 1: Expressed in the retina (at protein level). Isoform 5: Expressed in the retina (at protein level). Expressed in the brain. Expressed in the testis (at protein level). Expressed in kidney (at protein level).

The protein resides in the golgi apparatus. It is found in the cytoplasm. Its subcellular location is the cytoskeleton. It localises to the microtubule organizing center. The protein localises to the centrosome. The protein resides in the cell projection. It is found in the cilium. Its subcellular location is the cilium basal body. It localises to the cilium axoneme. The protein localises to the flagellum axoneme. Its function is as follows. Acts as a guanine-nucleotide releasing factor (GEF) for RAB8A and RAB37 by promoting the conversion of inactive RAB-GDP to the active form RAB-GTP. GEF activity towards RAB8A may facilitate ciliary trafficking by modulating ciliary intracellular localization of RAB8A. GEF activity towards RAB37 maintains autophagic homeostasis and retinal function. Involved in photoreceptor integrity. May control cilia formation by regulating actin stress filaments and cell contractility. May be involved in microtubule organization and regulation of transport in primary cilia. In terms of biological role, isoform 5 may play a critical role in spermatogenesis and in intraflagellar transport processes. The chain is X-linked retinitis pigmentosa GTPase regulator from Mus musculus (Mouse).